The chain runs to 461 residues: Fumarate hydratase class II (461 aa).

Residues 97 to 99, 127 to 130, 137 to 139, and Thr-185 each bind substrate; these read SGT, HPND, and SSN. The active-site Proton donor/acceptor is His-186. The active site involves Ser-316. Substrate contacts are provided by residues Ser-317 and 322-324; that span reads KVN.

Belongs to the class-II fumarase/aspartase family. Fumarase subfamily. As to quaternary structure, homotetramer.

The protein localises to the cytoplasm. The catalysed reaction is (S)-malate = fumarate + H2O. Its pathway is carbohydrate metabolism; tricarboxylic acid cycle; (S)-malate from fumarate: step 1/1. In terms of biological role, involved in the TCA cycle. Catalyzes the stereospecific interconversion of fumarate to L-malate. This is Fumarate hydratase class II from Staphylococcus haemolyticus (strain JCSC1435).